Here is a 244-residue protein sequence, read N- to C-terminus: Electron transfer flavoprotein beta subunit lysine methyltransferase homolog (244 aa).

The protein belongs to the methyltransferase superfamily. ETFBKMT family.

Probable methyltransferase. The chain is Electron transfer flavoprotein beta subunit lysine methyltransferase homolog from Caenorhabditis elegans.